The following is a 159-amino-acid chain: Transmembrane protein 42 (159 aa).

4 consecutive transmembrane segments (helical) span residues Phe37–Ala57, Gly68–Phe88, Ile100–Leu120, and Cys124–His144.

The protein localises to the membrane. The chain is Transmembrane protein 42 (TMEM42) from Bos taurus (Bovine).